A 261-amino-acid polypeptide reads, in one-letter code: Glucose 1-dehydrogenase (261 aa).

Ala-11–Val-35 contacts NADP(+). Ser-145 contributes to the substrate binding site. Residue Tyr-158 is the Proton acceptor of the active site.

Belongs to the short-chain dehydrogenases/reductases (SDR) family. In terms of assembly, homotetramer.

It catalyses the reaction D-glucose + NAD(+) = D-glucono-1,5-lactone + NADH + H(+). The catalysed reaction is D-glucose + NADP(+) = D-glucono-1,5-lactone + NADPH + H(+). The chain is Glucose 1-dehydrogenase (gdh) from Bacillus subtilis (strain 168).